The sequence spans 165 residues: Chorismate pyruvate-lyase (165 aa).

M35, R77, L115, and E156 together coordinate substrate.

It belongs to the UbiC family. In terms of assembly, monomer.

The protein localises to the cytoplasm. The enzyme catalyses chorismate = 4-hydroxybenzoate + pyruvate. It functions in the pathway cofactor biosynthesis; ubiquinone biosynthesis. Its function is as follows. Removes the pyruvyl group from chorismate, with concomitant aromatization of the ring, to provide 4-hydroxybenzoate (4HB) for the ubiquinone pathway. The protein is Chorismate pyruvate-lyase of Escherichia coli (strain K12 / MC4100 / BW2952).